The following is a 256-amino-acid chain: ATP synthase peripheral stalk subunit b, mitochondrial (256 aa).

Residues Met-1–Ala-42 constitute a mitochondrion transit peptide. At Lys-131 the chain carries N6-succinyllysine. An N6-acetyllysine mark is found at Lys-139, Lys-154, Lys-162, Lys-221, Lys-233, and Lys-244.

The protein belongs to the eukaryotic ATPase B chain family. As to quaternary structure, component of the ATP synthase complex composed at least of ATP5F1A/subunit alpha, ATP5F1B/subunit beta, ATP5MC1/subunit c (homooctomer), MT-ATP6/subunit a, MT-ATP8/subunit 8, ATP5ME/subunit e, ATP5MF/subunit f, ATP5MG/subunit g, ATP5MK/subunit k, ATP5MJ/subunit j, ATP5F1C/subunit gamma, ATP5F1D/subunit delta, ATP5F1E/subunit epsilon, ATP5PF/subunit F6, ATP5PB/subunit b, ATP5PD/subunit d, ATP5PO/subunit OSCP. ATP synthase complex consists of a soluble F(1) head domain (subunits alpha(3) and beta(3)) - the catalytic core - and a membrane F(0) domain - the membrane proton channel (subunits c, a, 8, e, f, g, k and j). These two domains are linked by a central stalk (subunits gamma, delta, and epsilon) rotating inside the F1 region and a stationary peripheral stalk (subunits F6, b, d, and OSCP).

Its subcellular location is the mitochondrion. It localises to the mitochondrion inner membrane. In terms of biological role, subunit b, of the mitochondrial membrane ATP synthase complex (F(1)F(0) ATP synthase or Complex V) that produces ATP from ADP in the presence of a proton gradient across the membrane which is generated by electron transport complexes of the respiratory chain. ATP synthase complex consist of a soluble F(1) head domain - the catalytic core - and a membrane F(1) domain - the membrane proton channel. These two domains are linked by a central stalk rotating inside the F(1) region and a stationary peripheral stalk. During catalysis, ATP synthesis in the catalytic domain of F(1) is coupled via a rotary mechanism of the central stalk subunits to proton translocation. In vivo, can only synthesize ATP although its ATP hydrolase activity can be activated artificially in vitro. Part of the complex F(0) domain. Part of the complex F(0) domain and the peripheric stalk, which acts as a stator to hold the catalytic alpha(3)beta(3) subcomplex and subunit a/ATP6 static relative to the rotary elements. This chain is ATP synthase peripheral stalk subunit b, mitochondrial, found in Pongo abelii (Sumatran orangutan).